A 474-amino-acid polypeptide reads, in one-letter code: Bifunctional ribulose 5-phosphate reductase/CDP-ribitol pyrophosphorylase Bcs1 (474 aa).

Residues 1 to 238 form a ribitol-5-phosphate cytidylyltransferase region; that stretch reads MNKNKNIGII…DKLFQSRSHF (238 aa). A ribulose-5-phosphate reductase region spans residues 250 to 474; the sequence is YDMKDQVLVV…ITNILADLYK (225 aa).

In the N-terminal section; belongs to the IspD/TarI cytidylyltransferase family. The protein in the C-terminal section; belongs to the short-chain dehydrogenases/reductases (SDR) family. As to quaternary structure, monomer.

The enzyme catalyses D-ribitol 5-phosphate + CTP + H(+) = CDP-L-ribitol + diphosphate. The catalysed reaction is D-ribitol 5-phosphate + NADP(+) = D-ribulose 5-phosphate + NADPH + H(+). It participates in capsule biogenesis; capsule polysaccharide biosynthesis. Catalyzes the NADPH-dependent reduction of D-ribulose 5-phosphate to D-ribitol 5-phosphate and the further reaction of D-ribitol 5-phosphate with CTP to form CDP-ribitol. The polypeptide is Bifunctional ribulose 5-phosphate reductase/CDP-ribitol pyrophosphorylase Bcs1 (Haemophilus influenzae).